A 507-amino-acid polypeptide reads, in one-letter code: Protein zntA (507 aa).

The first 18 residues, 1–18 (MSIFAYSILAGLAPLLSS), serve as a signal peptide directing secretion. N-linked (GlcNAc...) asparagine glycosylation occurs at Asn31. The helical transmembrane segment at 35–55 (FHILLCISAGLLFAVASLELI) threads the bilayer. A disordered region spans residues 124-179 (GLNLNNLNQATNLDNNEEDNDNLDNDGENEIENDHDHDHQEDEGGDNDHDHESEEK). Over residues 125–137 (LNLNNLNQATNLD) the composition is skewed to low complexity. Residues 138–154 (NNEEDNDNLDNDGENEI) show a composition bias toward acidic residues. The span at 155–179 (ENDHDHDHQEDEGGDNDHDHESEEK) shows a compositional bias: basic and acidic residues. The helical transmembrane segment at 185–205 (IPMYGIGFGFAILIIVESIFS) threads the bilayer. The interval 209–264 (GGGGGGGHHSHSHGSLSSSSSNDVISDYISNNNSNNINNNDDDNNNNNNNNDDDDD) is disordered. A compositionally biased stretch (low complexity) spans 221 to 258 (HGSLSSSSSNDVISDYISNNNSNNINNNDDDNNNNNNN). Residues Asn240, Asn298, Asn328, Asn342, and Asn351 are each glycosylated (N-linked (GlcNAc...) asparagine). The disordered stretch occupies residues 305–350 (PNIASPVMNKDNNNNDKDKNRNSNKSDIKNSGSINNGNNSGNNNNN). Residues 317 to 332 (NNNDKDKNRNSNKSDI) show a composition bias toward basic and acidic residues. Low complexity predominate over residues 333–350 (KNSGSINNGNNSGNNNNN). 5 consecutive transmembrane segments (helical) span residues 355–375 (LTITTFIALSIHSFVDGVVIS), 388–408 (VALAIVIHKIPDGLVLSSLIL), 422–442 (FFYFLLISCMTPLGSFISSFL), 451–471 (GAFVLGFGAGTFIYITSTAIL), and 486–506 (LFSIFLGYLLFIFLDSQFHGA).

The protein belongs to the ZIP transporter (TC 2.A.5) family.

The protein localises to the membrane. Functionally, may transport divalent cations. May participate, with dstA, in the regulation of the differentiation of stalk cells during development. The chain is Protein zntA (zntA) from Dictyostelium discoideum (Social amoeba).